A 48-amino-acid polypeptide reads, in one-letter code: ATP synthase protein 8 (48 aa).

The chain crosses the membrane as a helical span at residues 13 to 35 (LTYGFTFILTILFLTSYVFLPMI).

It belongs to the ATPase protein 8 family. In terms of assembly, F-type ATPases have 2 components, CF(1) - the catalytic core - and CF(0) - the membrane proton channel. In yeast, the dimeric form of ATP synthase consists of 18 polypeptides: alpha, beta, gamma, delta, epsilon, 4 (B), 5 (OSCP), 6 (A), 8, 9 (C), d, E (Tim11), f, g, h, i, j and k.

Its subcellular location is the mitochondrion membrane. In terms of biological role, mitochondrial membrane ATP synthase (F(1)F(0) ATP synthase or Complex V) produces ATP from ADP in the presence of a proton gradient across the membrane which is generated by electron transport complexes of the respiratory chain. F-type ATPases consist of two structural domains, F(1) - containing the extramembraneous catalytic core and F(0) - containing the membrane proton channel, linked together by a central stalk and a peripheral stalk. During catalysis, ATP synthesis in the catalytic domain of F(1) is coupled via a rotary mechanism of the central stalk subunits to proton translocation. Part of the complex F(0) domain. Minor subunit located with subunit a in the membrane. In Eremothecium gossypii (strain ATCC 10895 / CBS 109.51 / FGSC 9923 / NRRL Y-1056) (Yeast), this protein is ATP synthase protein 8 (ATP8).